Here is a 176-residue protein sequence, read N- to C-terminus: uncharacterized protein (176 aa).

A compositionally biased stretch (polar residues) spans 15-28 (TSSNPPASASQSTG). Disordered stretches follow at residues 15–100 (TSSN…TSAG) and 125–176 (ASLR…NLGA). Basic and acidic residues predominate over residues 43-52 (FIDKVTDKPS).

This is an uncharacterized protein from Homo sapiens (Human).